The sequence spans 346 residues: Protein RecA (346 aa).

Gly-79–Thr-86 lines the ATP pocket.

It belongs to the RecA family.

Its subcellular location is the cytoplasm. Functionally, can catalyze the hydrolysis of ATP in the presence of single-stranded DNA, the ATP-dependent uptake of single-stranded DNA by duplex DNA, and the ATP-dependent hybridization of homologous single-stranded DNAs. It interacts with LexA causing its activation and leading to its autocatalytic cleavage. The protein is Protein RecA of Chlorobaculum tepidum (strain ATCC 49652 / DSM 12025 / NBRC 103806 / TLS) (Chlorobium tepidum).